Consider the following 497-residue polypeptide: Serine/threonine-protein phosphatase 2A 56 kDa regulatory subunit beta isoform (497 aa).

Positions 1–19 (METKLPPASTPTSPSSPGL) are enriched in low complexity. Disordered stretches follow at residues 1-55 (METK…YQSN) and 473-497 (QGTQ…GGQS). Ser-32, Ser-35, Ser-44, Ser-46, Ser-47, and Ser-48 each carry phosphoserine. Positions 34–45 (RSLRRARPRRSH) are enriched in basic residues.

Belongs to the phosphatase 2A regulatory subunit B56 family. As to quaternary structure, component of the serine/threonine-protein phosphatase 2A complex (PP2A). This complex consists of a common heterodimeric core enzyme, composed of a 36 kDa catalytic subunit (subunit C) and a 65 kDa constant scaffold subunit (PR65 or subunit A), that associates with a variety of regulatory subunits. Proteins that associate with the core dimer include three families of regulatory subunits B (the R2/B/PR55/B55, R3/B''/PR72/PR130/PR59 and R5/B'/B56 families), the 48 kDa variable regulatory subunit, viral proteins, and cell signaling molecules. Interacts with SGO1. Interacts with AKT1. Post-translationally, ubiquitinated by CUL3-KLHL15 complex; this modification leads to proteasomal degradation. Widely expressed at the mRNA level, with highest levels in cerebellum and lung.

The protein localises to the cytoplasm. In terms of biological role, as the regulatory component of the serine/threonine-protein phosphatase 2A (PP2A) holoenzyme, modulates substrate specificity, subcellular localization, and responsiveness to phosphorylation. The phosphorylated form mediates the interaction between PP2A and AKT1, leading to AKT1 dephosphorylation. The polypeptide is Serine/threonine-protein phosphatase 2A 56 kDa regulatory subunit beta isoform (Ppp2r5b) (Rattus norvegicus (Rat)).